The following is an 818-amino-acid chain: RNA-directed RNA polymerase (818 aa).

Residues 524-641 (PVAIGLDASR…IIERRNLKRV (118 aa)) enclose the RdRp catalytic domain.

The protein belongs to the tombusviridae RNA polymerase family.

The catalysed reaction is RNA(n) + a ribonucleoside 5'-triphosphate = RNA(n+1) + diphosphate. In terms of biological role, RNA-dependent RNA polymerase that plays an essential role in the virus replication. The protein is RNA-directed RNA polymerase of Cymbidium (Creeping white clover).